Consider the following 444-residue polypeptide: Chromosome partition protein MukF (444 aa).

The leucine-zipper stretch occupies residues 212 to 240 (LDETSGNLRELQDTLNAAGDKLQAQLLRI).

It belongs to the MukF family. Interacts, and probably forms a ternary complex, with MukE and MukB via its C-terminal region. The complex formation is stimulated by calcium or magnesium. It is required for an interaction between MukE and MukB.

Its subcellular location is the cytoplasm. The protein localises to the nucleoid. Functionally, involved in chromosome condensation, segregation and cell cycle progression. May participate in facilitating chromosome segregation by condensation DNA from both sides of a centrally located replisome during cell division. Not required for mini-F plasmid partitioning. Probably acts via its interaction with MukB and MukE. Overexpression results in anucleate cells. It has a calcium binding activity. This is Chromosome partition protein MukF from Haemophilus influenzae (strain ATCC 51907 / DSM 11121 / KW20 / Rd).